Reading from the N-terminus, the 422-residue chain is BTB/POZ domain-containing protein KCTD18 (422 aa).

The BTB domain maps to 12–80 (DILRLNVGGC…YLHGEVHIPT (69 aa)). Disordered regions lie at residues 289–357 (VKNS…THLP) and 376–422 (LRRT…DQTK). A compositionally biased stretch (pro residues) spans 396–406 (PAGPPEPPPDA). Residues 413 to 422 (WTENGQDQTK) show a composition bias toward polar residues.

This chain is BTB/POZ domain-containing protein KCTD18 (KCTD18), found in Bos taurus (Bovine).